Reading from the N-terminus, the 305-residue chain is Sulfate adenylyltransferase subunit 2 (305 aa).

This sequence belongs to the PAPS reductase family. CysD subfamily. Heterodimer composed of CysD, the smaller subunit, and CysN.

The enzyme catalyses sulfate + ATP + H(+) = adenosine 5'-phosphosulfate + diphosphate. It participates in sulfur metabolism; hydrogen sulfide biosynthesis; sulfite from sulfate: step 1/3. Its function is as follows. With CysN forms the ATP sulfurylase (ATPS) that catalyzes the adenylation of sulfate producing adenosine 5'-phosphosulfate (APS) and diphosphate, the first enzymatic step in sulfur assimilation pathway. APS synthesis involves the formation of a high-energy phosphoric-sulfuric acid anhydride bond driven by GTP hydrolysis by CysN coupled to ATP hydrolysis by CysD. The polypeptide is Sulfate adenylyltransferase subunit 2 (Pseudomonas entomophila (strain L48)).